A 475-amino-acid polypeptide reads, in one-letter code: uncharacterized protein (475 aa).

The stretch at 185–244 (EISVSAISEQLASLMERVDKLEKMNAALEEENKQLKKEREATIKSVKKEAKKIKQEKPQI) forms a coiled coil.

This is an uncharacterized protein from Nora virus.